Here is a 189-residue protein sequence, read N- to C-terminus: Peptidyl-tRNA hydrolase (189 aa).

Residue tyrosine 15 participates in tRNA binding. Histidine 20 serves as the catalytic Proton acceptor. TRNA contacts are provided by phenylalanine 66, asparagine 68, and asparagine 114.

This sequence belongs to the PTH family. In terms of assembly, monomer.

It localises to the cytoplasm. It catalyses the reaction an N-acyl-L-alpha-aminoacyl-tRNA + H2O = an N-acyl-L-amino acid + a tRNA + H(+). Functionally, hydrolyzes ribosome-free peptidyl-tRNAs (with 1 or more amino acids incorporated), which drop off the ribosome during protein synthesis, or as a result of ribosome stalling. Catalyzes the release of premature peptidyl moieties from peptidyl-tRNA molecules trapped in stalled 50S ribosomal subunits, and thus maintains levels of free tRNAs and 50S ribosomes. This chain is Peptidyl-tRNA hydrolase, found in Streptococcus pyogenes serotype M1.